We begin with the raw amino-acid sequence, 428 residues long: Peptidase B (428 aa).

Mn(2+)-binding residues include Lys195 and Asp200. Lys207 is an active-site residue. Mn(2+) contacts are provided by Asp218, Asp277, and Glu279. Arg281 is a catalytic residue.

Belongs to the peptidase M17 family. Homohexamer. Requires Mn(2+) as cofactor.

The protein resides in the cytoplasm. It carries out the reaction Release of an N-terminal amino acid, Xaa, from a peptide or arylamide. Xaa is preferably Glu or Asp but may be other amino acids, including Leu, Met, His, Cys and Gln.. Functionally, probably plays an important role in intracellular peptide degradation. The protein is Peptidase B of Enterobacter sp. (strain 638).